Here is an 850-residue protein sequence, read N- to C-terminus: Trimethylamine-N-oxide reductase (850 aa).

Positions 1 to 39 (MKNKDSLHVSRRRFLAQLGGLTVAGMLGPSLLTPRSARA) form a signal peptide, tat-type signal. Serine 191 serves as a coordination point for Mo-bis(molybdopterin guanine dinucleotide).

It belongs to the prokaryotic molybdopterin-containing oxidoreductase family. It depends on Mo-bis(molybdopterin guanine dinucleotide) as a cofactor. Post-translationally, predicted to be exported by the Tat system. The position of the signal peptide cleavage has not been experimentally proven.

The protein resides in the periplasm. The enzyme catalyses trimethylamine + 2 Fe(III)-[cytochrome c] + H2O = trimethylamine N-oxide + 2 Fe(II)-[cytochrome c] + 3 H(+). Functionally, reduces trimethylamine-N-oxide (TMAO) into trimethylamine; an anaerobic reaction coupled to energy-yielding reactions. This chain is Trimethylamine-N-oxide reductase (torA), found in Salmonella typhimurium (strain LT2 / SGSC1412 / ATCC 700720).